The primary structure comprises 123 residues: Non-specific lipid-transfer protein 3 (123 aa).

The first 25 residues, M1–P25, serve as a signal peptide directing secretion. Intrachain disulfides connect C33–C80, C43–C57, C58–C105, and C78–C119.

This sequence belongs to the plant LTP family.

Plant non-specific lipid-transfer proteins transfer phospholipids as well as galactolipids across membranes. May play a role in wax or cutin deposition in the cell walls of expanding epidermal cells and certain secretory tissues. In Prunus dulcis (Almond), this protein is Non-specific lipid-transfer protein 3.